A 43-amino-acid polypeptide reads, in one-letter code: Protein PsbN (43 aa).

A helical membrane pass occupies residues isoleucine 7–proline 29.

The protein belongs to the PsbN family.

It localises to the plastid. The protein localises to the chloroplast thylakoid membrane. Functionally, may play a role in photosystem I and II biogenesis. The chain is Protein PsbN from Phaeodactylum tricornutum (strain CCAP 1055/1).